Consider the following 245-residue polypeptide: MIIPALDLIDGKVVRLHQGDYNKQRDYDDDPIRRYQQYQQDGAKLLHLVDLTGAKDPLARQIPLLKQLVACVNVPVQVGGGIRSEEDVKSLLAAGASRVVIGSTAVSQPELVKTWFERYGADAIVLALDVRIDEQGKKWVAVSGWQENSPYTLEEIIALYQPVGLKHVLCTDISRDGTLAGSNVELYKEISQRFPDILFQASGGIGDLQDIAALPGSGVAGIIVGRALLEGKFTLQEAISCWQNA.

The active-site Proton acceptor is the aspartate 7. Catalysis depends on aspartate 129, which acts as the Proton donor.

This sequence belongs to the HisA/HisF family.

It is found in the cytoplasm. It carries out the reaction 1-(5-phospho-beta-D-ribosyl)-5-[(5-phospho-beta-D-ribosylamino)methylideneamino]imidazole-4-carboxamide = 5-[(5-phospho-1-deoxy-D-ribulos-1-ylimino)methylamino]-1-(5-phospho-beta-D-ribosyl)imidazole-4-carboxamide. Its pathway is amino-acid biosynthesis; L-histidine biosynthesis; L-histidine from 5-phospho-alpha-D-ribose 1-diphosphate: step 4/9. In Proteus mirabilis (strain HI4320), this protein is 1-(5-phosphoribosyl)-5-[(5-phosphoribosylamino)methylideneamino] imidazole-4-carboxamide isomerase.